The chain runs to 364 residues: UDP-N-acetylglucosamine--N-acetylmuramyl-(pentapeptide) pyrophosphoryl-undecaprenol N-acetylglucosamine transferase (364 aa).

UDP-N-acetyl-alpha-D-glucosamine is bound by residues 10 to 12, N126, R167, S199, I253, and Q298; that span reads TGG.

This sequence belongs to the glycosyltransferase 28 family. MurG subfamily.

The protein localises to the cell inner membrane. The enzyme catalyses di-trans,octa-cis-undecaprenyl diphospho-N-acetyl-alpha-D-muramoyl-L-alanyl-D-glutamyl-meso-2,6-diaminopimeloyl-D-alanyl-D-alanine + UDP-N-acetyl-alpha-D-glucosamine = di-trans,octa-cis-undecaprenyl diphospho-[N-acetyl-alpha-D-glucosaminyl-(1-&gt;4)]-N-acetyl-alpha-D-muramoyl-L-alanyl-D-glutamyl-meso-2,6-diaminopimeloyl-D-alanyl-D-alanine + UDP + H(+). It functions in the pathway cell wall biogenesis; peptidoglycan biosynthesis. Cell wall formation. Catalyzes the transfer of a GlcNAc subunit on undecaprenyl-pyrophosphoryl-MurNAc-pentapeptide (lipid intermediate I) to form undecaprenyl-pyrophosphoryl-MurNAc-(pentapeptide)GlcNAc (lipid intermediate II). The chain is UDP-N-acetylglucosamine--N-acetylmuramyl-(pentapeptide) pyrophosphoryl-undecaprenol N-acetylglucosamine transferase from Amoebophilus asiaticus (strain 5a2).